Here is a 93-residue protein sequence, read N- to C-terminus: U12-lycotoxin-Ls1c (93 aa).

The N-terminal stretch at 1–18 (MKFAVILLFSLVVLAVAS) is a signal peptide. Residues 19 to 38 (ESVEEVRREIDIEDLPEQQR) constitute a propeptide that is removed on maturation.

It belongs to the neurotoxin 31 family. Post-translationally, contains 5 disulfide bonds. In terms of tissue distribution, expressed by the venom gland.

It localises to the secreted. This is U12-lycotoxin-Ls1c from Lycosa singoriensis (Wolf spider).